A 219-amino-acid chain; its full sequence is Redox-sensing transcriptional repressor Rex (219 aa).

A DNA-binding region (H-T-H motif) is located at residues 17 to 56 (VYLRVLDNLVKRDIEVVSSKSLSKETGFTAEQIRKDLAFF). 91–96 (GAGHLG) lines the NAD(+) pocket.

It belongs to the transcriptional regulatory Rex family. Homodimer.

The protein localises to the cytoplasm. In terms of biological role, modulates transcription in response to changes in cellular NADH/NAD(+) redox state. The polypeptide is Redox-sensing transcriptional repressor Rex (Natranaerobius thermophilus (strain ATCC BAA-1301 / DSM 18059 / JW/NM-WN-LF)).